Reading from the N-terminus, the 338-residue chain is Methionine import ATP-binding protein MetN (338 aa).

The region spanning 2 to 241 (ISLDGIRKVF…PKEHITKEFV (240 aa)) is the ABC transporter domain. ATP is bound at residue 38-45 (GYSGAGKS).

Belongs to the ABC transporter superfamily. Methionine importer (TC 3.A.1.24) family. In terms of assembly, the complex is composed of two ATP-binding proteins (MetN), two transmembrane proteins (MetI) and a solute-binding protein (MetQ).

Its subcellular location is the cell membrane. The catalysed reaction is L-methionine(out) + ATP + H2O = L-methionine(in) + ADP + phosphate + H(+). It catalyses the reaction D-methionine(out) + ATP + H2O = D-methionine(in) + ADP + phosphate + H(+). Part of the ABC transporter complex MetNIQ involved in methionine import. Responsible for energy coupling to the transport system. The polypeptide is Methionine import ATP-binding protein MetN (Halalkalibacterium halodurans (strain ATCC BAA-125 / DSM 18197 / FERM 7344 / JCM 9153 / C-125) (Bacillus halodurans)).